Reading from the N-terminus, the 347-residue chain is MAEITAKLVKELREKSGAGVMDAKKALVETDGDIEKAIELLREKGMAKAAKKADRVAAEGLTGVYVNGNVAAVVEVNAETDFVAKNAQFVDLVNATAKVIAEGKPANNEEALALTMPSGETLEAAYVSATATIGEKISFRRFALIEKTDAQHFGAYQHNGGRIGVISVIEGGDEALAKQISMHIAAMKPTVLSYKELDEQFVKDELAQLNHAIDQDNESRAMVGKPALPHLKYGSKAQLTDAVVAQAEEDIKAELAAEGKPEKIWDKIIPGKMDRFMLDNTKVDQAYTLLAQVYIMDDSKTVEAYLESVNASVVEFARFEVGEGIEKAANDFESEVAATMAAALGQN.

The tract at residues 80–83 (TDFV) is involved in Mg(2+) ion dislocation from EF-Tu.

It belongs to the EF-Ts family.

Its subcellular location is the cytoplasm. Associates with the EF-Tu.GDP complex and induces the exchange of GDP to GTP. It remains bound to the aminoacyl-tRNA.EF-Tu.GTP complex up to the GTP hydrolysis stage on the ribosome. This is Elongation factor Ts from Streptococcus gordonii (strain Challis / ATCC 35105 / BCRC 15272 / CH1 / DL1 / V288).